A 126-amino-acid chain; its full sequence is Major sperm protein 2 (126 aa).

Position 2 is an N-acetylalanine (Ala2). An MSP domain is found at 8–125 (DIATMPNQKV…RRKNLPIEYN (118 aa)).

As to expression, sperm.

The protein resides in the cell projection. It localises to the pseudopodium. The protein localises to the cytoplasm. Its subcellular location is the cytoskeleton. In terms of biological role, central component in molecular interactions underlying sperm crawling. Forms an extensive filament system that extends from sperm villipoda, along the leading edge of the pseudopod. The polypeptide is Major sperm protein 2 (MSP-2) (Globodera rostochiensis (Golden nematode worm)).